Here is a 221-residue protein sequence, read N- to C-terminus: Casparian strip membrane protein 3 (221 aa).

Basic and acidic residues predominate over residues 1-12 (MDIEKAASRREE). The segment at 1–28 (MDIEKAASRREEEEPIVQRPKLDKGKGK) is disordered. Topologically, residues 1–58 (MDIEKAASRREEEEPIVQRPKLDKGKGKAHVFAPPMNYNRIMDKHKQEKVSAAGWKRG) are cytoplasmic. A helical transmembrane segment spans residues 59–79 (VAIFDFVLRLIAAITAMAAAA). The Extracellular segment spans residues 80-109 (KMATTEETLPFFTQFLQFQAEYTDLPTMSS). A helical transmembrane segment spans residues 110-130 (FVIVNSIVGGYLTLSLPFSIV). At 131-148 (CILRPLAVPPRLFLIICD) the chain is on the cytoplasmic side. Residues 149–169 (TAMMGLTMMAASASAAIVYLA) form a helical membrane-spanning segment. Topologically, residues 170-194 (HNGNSSSNWLPVCQQFGDFCQGTSG) are extracellular. N-linked (GlcNAc...) asparagine glycosylation occurs at Asn-173. Residues 195-215 (AVVASFIAATLLMFLVILSAF) traverse the membrane as a helical segment. Over 216–221 (ALKRST) the chain is Cytoplasmic.

The protein belongs to the Casparian strip membrane proteins (CASP) family. As to quaternary structure, homodimer and heterodimers.

The protein localises to the cell membrane. In terms of biological role, regulates membrane-cell wall junctions and localized cell wall deposition. Required for establishment of the Casparian strip membrane domain (CSD) and the subsequent formation of Casparian strips, a cell wall modification of the root endodermis that determines an apoplastic barrier between the intraorganismal apoplasm and the extraorganismal apoplasm and prevents lateral diffusion. The protein is Casparian strip membrane protein 3 of Arabidopsis lyrata subsp. lyrata (Lyre-leaved rock-cress).